Here is a 215-residue protein sequence, read N- to C-terminus: Imidazole glycerol phosphate synthase subunit HisH (215 aa).

Positions 9–215 (EVVLVDYGLG…QNFVDYCLER (207 aa)) constitute a Glutamine amidotransferase type-1 domain. Cys85 serves as the catalytic Nucleophile. Residues His193 and Glu195 contribute to the active site.

In terms of assembly, heterodimer of HisH and HisF.

It is found in the cytoplasm. It carries out the reaction 5-[(5-phospho-1-deoxy-D-ribulos-1-ylimino)methylamino]-1-(5-phospho-beta-D-ribosyl)imidazole-4-carboxamide + L-glutamine = D-erythro-1-(imidazol-4-yl)glycerol 3-phosphate + 5-amino-1-(5-phospho-beta-D-ribosyl)imidazole-4-carboxamide + L-glutamate + H(+). The enzyme catalyses L-glutamine + H2O = L-glutamate + NH4(+). The protein operates within amino-acid biosynthesis; L-histidine biosynthesis; L-histidine from 5-phospho-alpha-D-ribose 1-diphosphate: step 5/9. IGPS catalyzes the conversion of PRFAR and glutamine to IGP, AICAR and glutamate. The HisH subunit catalyzes the hydrolysis of glutamine to glutamate and ammonia as part of the synthesis of IGP and AICAR. The resulting ammonia molecule is channeled to the active site of HisF. In Natronomonas pharaonis (strain ATCC 35678 / DSM 2160 / CIP 103997 / JCM 8858 / NBRC 14720 / NCIMB 2260 / Gabara) (Halobacterium pharaonis), this protein is Imidazole glycerol phosphate synthase subunit HisH.